A 253-amino-acid chain; its full sequence is 3-dehydroquinate dehydratase (253 aa).

Residues 46–48 (EWR) and arginine 82 each bind 3-dehydroquinate. The active-site Proton donor/acceptor is the histidine 143. Lysine 170 acts as the Schiff-base intermediate with substrate in catalysis. 3-dehydroquinate contacts are provided by arginine 213, serine 232, and glutamine 236.

The protein belongs to the type-I 3-dehydroquinase family. As to quaternary structure, homodimer.

It carries out the reaction 3-dehydroquinate = 3-dehydroshikimate + H2O. The protein operates within metabolic intermediate biosynthesis; chorismate biosynthesis; chorismate from D-erythrose 4-phosphate and phosphoenolpyruvate: step 3/7. Functionally, involved in the third step of the chorismate pathway, which leads to the biosynthesis of aromatic amino acids. Catalyzes the cis-dehydration of 3-dehydroquinate (DHQ) and introduces the first double bond of the aromatic ring to yield 3-dehydroshikimate. The protein is 3-dehydroquinate dehydratase of Bacillus velezensis (strain DSM 23117 / BGSC 10A6 / LMG 26770 / FZB42) (Bacillus amyloliquefaciens subsp. plantarum).